The sequence spans 518 residues: Phytoene desaturase (neurosporene-forming) (518 aa).

14–47 (LVIGSGLGGLAAAMRLGAKGWRVTVIDKLDVPGG) serves as a coordination point for FAD.

This sequence belongs to the carotenoid/retinoid oxidoreductase family. It depends on FAD as a cofactor.

The enzyme catalyses 15-cis-phytoene + 3 A = all-trans-neurosporene + 3 AH2. Its pathway is carotenoid biosynthesis. Functionally, converts phytoene into all-trans-neurosporene as the major product, via the intermediary of phytofluene and zeta-carotene, by the introduction of three double bonds. The chain is Phytoene desaturase (neurosporene-forming) (crtI) from Cereibacter sphaeroides (strain ATCC 17023 / DSM 158 / JCM 6121 / CCUG 31486 / LMG 2827 / NBRC 12203 / NCIMB 8253 / ATH 2.4.1.) (Rhodobacter sphaeroides).